Here is a 304-residue protein sequence, read N- to C-terminus: Porphobilinogen deaminase (304 aa).

C240 bears the S-(dipyrrolylmethanemethyl)cysteine mark.

It belongs to the HMBS family. In terms of assembly, monomer. The cofactor is dipyrromethane.

The enzyme catalyses 4 porphobilinogen + H2O = hydroxymethylbilane + 4 NH4(+). The protein operates within porphyrin-containing compound metabolism; protoporphyrin-IX biosynthesis; coproporphyrinogen-III from 5-aminolevulinate: step 2/4. Its function is as follows. Tetrapolymerization of the monopyrrole PBG into the hydroxymethylbilane pre-uroporphyrinogen in several discrete steps. The protein is Porphobilinogen deaminase of Xanthomonas oryzae pv. oryzae (strain KACC10331 / KXO85).